Here is a 256-residue protein sequence, read N- to C-terminus: Pimeloyl-[acyl-carrier protein] methyl ester esterase (256 aa).

One can recognise an AB hydrolase-1 domain in the interval 15–242 (HLVLLHGWGL…AAHAPFISHP (228 aa)). Residues tryptophan 22, 82–83 (SL), and 143–147 (FLALQ) each bind substrate. The Nucleophile role is filled by serine 82. Active-site residues include aspartate 207 and histidine 235. Histidine 235 contributes to the substrate binding site.

Belongs to the AB hydrolase superfamily. Carboxylesterase BioH family. Monomer.

The protein resides in the cytoplasm. The enzyme catalyses 6-carboxyhexanoyl-[ACP] methyl ester + H2O = 6-carboxyhexanoyl-[ACP] + methanol + H(+). It participates in cofactor biosynthesis; biotin biosynthesis. Its function is as follows. The physiological role of BioH is to remove the methyl group introduced by BioC when the pimeloyl moiety is complete. It allows to synthesize pimeloyl-ACP via the fatty acid synthetic pathway through the hydrolysis of the ester bonds of pimeloyl-ACP esters. The polypeptide is Pimeloyl-[acyl-carrier protein] methyl ester esterase (Shigella boydii serotype 4 (strain Sb227)).